The chain runs to 363 residues: Chorismate synthase (363 aa).

The NADP(+) site is built by Arg48 and Arg54. Residues 131-133 (RSS), 244-245 (NA), Gly288, 303-307 (KPTSS), and Arg329 each bind FMN.

Belongs to the chorismate synthase family. In terms of assembly, homotetramer. FMNH2 is required as a cofactor.

The enzyme catalyses 5-O-(1-carboxyvinyl)-3-phosphoshikimate = chorismate + phosphate. Its pathway is metabolic intermediate biosynthesis; chorismate biosynthesis; chorismate from D-erythrose 4-phosphate and phosphoenolpyruvate: step 7/7. Catalyzes the anti-1,4-elimination of the C-3 phosphate and the C-6 proR hydrogen from 5-enolpyruvylshikimate-3-phosphate (EPSP) to yield chorismate, which is the branch point compound that serves as the starting substrate for the three terminal pathways of aromatic amino acid biosynthesis. This reaction introduces a second double bond into the aromatic ring system. This Hyphomonas neptunium (strain ATCC 15444) protein is Chorismate synthase.